The sequence spans 165 residues: Chorismate pyruvate-lyase (165 aa).

Methionine 35, arginine 77, leucine 115, and glutamate 156 together coordinate substrate.

It belongs to the UbiC family. In terms of assembly, monomer.

The protein resides in the cytoplasm. The catalysed reaction is chorismate = 4-hydroxybenzoate + pyruvate. It participates in cofactor biosynthesis; ubiquinone biosynthesis. Functionally, removes the pyruvyl group from chorismate, with concomitant aromatization of the ring, to provide 4-hydroxybenzoate (4HB) for the ubiquinone pathway. This is Chorismate pyruvate-lyase from Enterobacter sp. (strain 638).